Here is a 104-residue protein sequence, read N- to C-terminus: Large ribosomal subunit protein eL30 (104 aa).

Belongs to the eukaryotic ribosomal protein eL30 family.

This Tetrahymena thermophila (strain SB210) protein is Large ribosomal subunit protein eL30 (RPL30).